Here is a 469-residue protein sequence, read N- to C-terminus: UDP-N-acetylmuramate--L-alanine ligase (469 aa).

113 to 119 (GTHGKTT) is an ATP binding site.

This sequence belongs to the MurCDEF family.

The protein localises to the cytoplasm. The catalysed reaction is UDP-N-acetyl-alpha-D-muramate + L-alanine + ATP = UDP-N-acetyl-alpha-D-muramoyl-L-alanine + ADP + phosphate + H(+). It participates in cell wall biogenesis; peptidoglycan biosynthesis. Functionally, cell wall formation. This Neisseria meningitidis serogroup A / serotype 4A (strain DSM 15465 / Z2491) protein is UDP-N-acetylmuramate--L-alanine ligase.